The following is a 250-amino-acid chain: 3-deoxy-manno-octulosonate cytidylyltransferase (250 aa).

The protein belongs to the KdsB family.

It localises to the cytoplasm. The enzyme catalyses 3-deoxy-alpha-D-manno-oct-2-ulosonate + CTP = CMP-3-deoxy-beta-D-manno-octulosonate + diphosphate. It participates in nucleotide-sugar biosynthesis; CMP-3-deoxy-D-manno-octulosonate biosynthesis; CMP-3-deoxy-D-manno-octulosonate from 3-deoxy-D-manno-octulosonate and CTP: step 1/1. The protein operates within bacterial outer membrane biogenesis; lipopolysaccharide biosynthesis. In terms of biological role, activates KDO (a required 8-carbon sugar) for incorporation into bacterial lipopolysaccharide in Gram-negative bacteria. The polypeptide is 3-deoxy-manno-octulosonate cytidylyltransferase (Pectobacterium carotovorum subsp. carotovorum (strain PC1)).